Reading from the N-terminus, the 128-residue chain is Holin-like protein CidA (128 aa).

4 helical membrane-spanning segments follow: residues 4–24 (LLLT…INWV), 26–46 (ALLH…FTLL), 59–79 (GAAW…VGVI), and 88–108 (FGVS…VSTG).

The protein belongs to the CidA/LrgA family. CidA subfamily.

The protein localises to the cell membrane. Its function is as follows. Increases the activity of extracellular murein hydrolases possibly by mediating their export via hole formation. Inhibited by the antiholin-like proteins LrgAB. In an unstressed cell, the LrgAB products probably inhibit the function of the CidA protein. When a cell is stressed by the addition of antibiotics or by other factors in the environment, CidA possibly oligomerizes within the bacterial cell membrane, creating lesions that disrupt the proton motive force, which in turn results in loss of cell viability. These lesions are also hypothesized to regulate the subsequent cell lysis by either allowing the murein hydrolases access to the cell wall substrate and/or regulating their activity by a possible change in the cell wall pH that results from loss of membrane potential. This chain is Holin-like protein CidA, found in Bacillus subtilis (strain 168).